A 304-amino-acid chain; its full sequence is Glycine--tRNA ligase alpha subunit (304 aa).

This sequence belongs to the class-II aminoacyl-tRNA synthetase family. Tetramer of two alpha and two beta subunits.

It localises to the cytoplasm. The catalysed reaction is tRNA(Gly) + glycine + ATP = glycyl-tRNA(Gly) + AMP + diphosphate. The chain is Glycine--tRNA ligase alpha subunit from Actinobacillus pleuropneumoniae serotype 3 (strain JL03).